The sequence spans 458 residues: UDP-N-acetylmuramate--L-alanine ligase (458 aa).

118–124 (GTHGKTT) lines the ATP pocket.

The protein belongs to the MurCDEF family.

The protein localises to the cytoplasm. The catalysed reaction is UDP-N-acetyl-alpha-D-muramate + L-alanine + ATP = UDP-N-acetyl-alpha-D-muramoyl-L-alanine + ADP + phosphate + H(+). It participates in cell wall biogenesis; peptidoglycan biosynthesis. In terms of biological role, cell wall formation. The chain is UDP-N-acetylmuramate--L-alanine ligase from Clostridium acetobutylicum (strain ATCC 824 / DSM 792 / JCM 1419 / IAM 19013 / LMG 5710 / NBRC 13948 / NRRL B-527 / VKM B-1787 / 2291 / W).